A 766-amino-acid chain; its full sequence is Alpha-onocerin synthase LCD (766 aa).

PFTB repeat units lie at residues 101-143, 151-192, 456-507, 517-558, 594-634, 643-684, and 705-752; these read LCRA…GALD, QREI…RLMG, QESY…STTD, IHEC…PGYK, IQEG…LASG, IQRA…HVVH, and LHRA…WALG. Aspartate 488 functions as the Proton donor in the catalytic mechanism.

This sequence belongs to the terpene cyclase/mutase family.

It catalyses the reaction pre-alpha-onocerin = alpha-onocerin. It participates in secondary metabolite biosynthesis; terpenoid biosynthesis. Functionally, oxidosqualene cyclase involved in the biosynthesis of alpha-onocerin, a triterpenoid characterized by a symmetrical structure due to cyclizations at both termini of dioxidosqualene that inhibits acetylcholinesterase. Catalyzes the second half of the cyclization, exclusively from pre-alpha-onocerin. The sequence is that of Alpha-onocerin synthase LCD from Lycopodium clavatum (Stag's-horn clubmoss).